We begin with the raw amino-acid sequence, 75 residues long: Brevinin-2ISc (75 aa).

Residues 1 to 22 (MFTLKKSLLLLFFLGTISLSLC) form the signal peptide. A propeptide spans 23 to 40 (EEERDADEDEGEMTEEEV) (removed in mature form). Cysteine 69 and cysteine 75 are oxidised to a cystine.

In terms of tissue distribution, expressed by the skin glands.

Its subcellular location is the secreted. Functionally, has antimicrobial activity against Gram-negative bacterium E.coli ATCC 8739 (MIC=50 ug) and against Gram positive bacteria S.aureus ATCC 6538 (MIC=25 ug). Has no activity against methicillin-resistant S.aureus ATCC 43300, B.subtilis ATCC 6633 and against fungus C.albicans ATCC 90028. The chain is Brevinin-2ISc from Odorrana ishikawae (Ishikawa's frog).